Reading from the N-terminus, the 129-residue chain is Small ribosomal subunit protein uS11 (129 aa).

This sequence belongs to the universal ribosomal protein uS11 family. In terms of assembly, part of the 30S ribosomal subunit. Interacts with proteins S7 and S18. Binds to IF-3.

Its function is as follows. Located on the platform of the 30S subunit, it bridges several disparate RNA helices of the 16S rRNA. Forms part of the Shine-Dalgarno cleft in the 70S ribosome. This Bacillus cereus (strain ATCC 14579 / DSM 31 / CCUG 7414 / JCM 2152 / NBRC 15305 / NCIMB 9373 / NCTC 2599 / NRRL B-3711) protein is Small ribosomal subunit protein uS11.